A 778-amino-acid chain; its full sequence is Probable dipeptidyl peptidase 4 (778 aa).

Residues 1 to 18 form the signal peptide; the sequence is MKTSQFLSLLLLAGIAQA. 3 N-linked (GlcNAc...) asparagine glycosylation sites follow: Asn84, Asn114, and Asn222. Residues Ser616, Asp693, and His728 each act as charge relay system in the active site.

Belongs to the peptidase S9B family.

The protein resides in the secreted. It catalyses the reaction Release of an N-terminal dipeptide, Xaa-Yaa-|-Zaa-, from a polypeptide, preferentially when Yaa is Pro, provided Zaa is neither Pro nor hydroxyproline.. In terms of biological role, extracellular dipeptidyl-peptidase which removes N-terminal dipeptides sequentially from polypeptides having unsubstituted N-termini provided that the penultimate residue is proline. Contributes to pathogenicity. The polypeptide is Probable dipeptidyl peptidase 4 (DPP4) (Arthroderma benhamiae (strain ATCC MYA-4681 / CBS 112371) (Trichophyton mentagrophytes)).